Here is a 20-residue protein sequence, read N- to C-terminus: Poneritoxin (20 aa).

At M18 the chain carries Methionine sulfoxide; in form U1-PONTX-Dq3c. Residue K19 is modified to Lysine amide; in form U1-PONTX-Dq3a and U1-PONTX-Dq3c.

The peptide spanning residues 2 to 19 occurs in 3 forms and has been given 3 different names. U1-PONTX-Dq3a has an amidated Lys-19, U1-PONTX-Dq3c has an amidated Lys-19 and an oxidized Met-18, and U1-PONTX-Dq3b has no modifications at either Met-18 or Lys-19. As to expression, expressed by the venom gland.

It is found in the secreted. In terms of biological role, may have antimicrobial properties, like most ant linear peptides. The sequence is that of Poneritoxin from Dinoponera quadriceps (South American ant).